The sequence spans 389 residues: Chitin-binding protein CbpD (389 aa).

An N-terminal signal peptide occupies residues 1–25 (MKHYSATLALLPLTLALFLPQAAHA). Residues 26 to 208 (HGSMETPPSR…EAFYACIDVS (183 aa)) enclose the Chitin-binding type-4 domain. At Tyr-37 the chain carries Phosphotyrosine. The residue at position 210 (Ser-210) is a Phosphoserine.

The protein localises to the secreted. Its function is as follows. Binds but does not hydrolyze chitin. This chain is Chitin-binding protein CbpD (cpbD), found in Pseudomonas aeruginosa (strain UCBPP-PA14).